Here is a 295-residue protein sequence, read N- to C-terminus: Defective in cullin neddylation protein 1 (295 aa).

The region spanning 8–45 (QKTKLRQFVQWTQVTEAVSLNFLAKANWNIEYAMTLYF) is the UBA-like domain. The DCUN1 domain occupies 60–272 (VDRSNIERLF…LIDQFVDYCR (213 aa)).

Interacts with the cullin cul-3. Interacts with ubiquitin via its UBA-like domain. Interacts with ned-8/nedd8.

The protein resides in the nucleus. Its function is as follows. Required for neddylation of cullin components of SCF-type E3 ubiquitin ligase complexes. Neddylation of cullins play an essential role in the regulation of SCF-type complexes activity. Does not act by preventing deneddylation, but rather facilitates neddylation, possibly by acting with rbx-1 to recruit the Nedd8-charged E2 enzyme to the cullin component of SCF-type complexes. The protein is Defective in cullin neddylation protein 1 (dcn-1) of Caenorhabditis elegans.